Consider the following 460-residue polypeptide: tRNA modification GTPase MnmE (460 aa).

3 residues coordinate (6S)-5-formyl-5,6,7,8-tetrahydrofolate: arginine 22, glutamate 87, and arginine 126. Residues glycine 222–phenylalanine 381 form the TrmE-type G domain. Residue asparagine 232 coordinates K(+). GTP-binding positions include asparagine 232–serine 237, threonine 251–threonine 257, and aspartate 276–glycine 279. Serine 236 provides a ligand contact to Mg(2+). Positions 251, 253, and 256 each coordinate K(+). Threonine 257 lines the Mg(2+) pocket. Lysine 460 is a (6S)-5-formyl-5,6,7,8-tetrahydrofolate binding site.

Belongs to the TRAFAC class TrmE-Era-EngA-EngB-Septin-like GTPase superfamily. TrmE GTPase family. In terms of assembly, homodimer. Heterotetramer of two MnmE and two MnmG subunits. K(+) serves as cofactor.

The protein localises to the cytoplasm. Exhibits a very high intrinsic GTPase hydrolysis rate. Involved in the addition of a carboxymethylaminomethyl (cmnm) group at the wobble position (U34) of certain tRNAs, forming tRNA-cmnm(5)s(2)U34. The polypeptide is tRNA modification GTPase MnmE (Thermoanaerobacter sp. (strain X514)).